Here is a 442-residue protein sequence, read N- to C-terminus: Coiled-coil domain-containing protein 91 (442 aa).

Residues 1-16 (MDDDDFGGFEAAETFD) are GGA1-binding motif. A disordered region spans residues 1–27 (MDDDDFGGFEAAETFDGEQGGNQAVSP). Phosphoserine occurs at positions 43 and 46. The disordered stretch occupies residues 48–79 (ELILDHDRSSPSSGHLRSDAVISSPDDTRADS). Coiled coils occupy residues 127–213 (GVHV…ALSI) and 248–409 (CEEL…RLDQ). The homodimerization stretch occupies residues 211–414 (LSIIVDEYKA…RRLDQVTRQR (204 aa)).

Homodimer. Interacts with GGA1, GGA2 and AP1G1.

It localises to the membrane. The protein resides in the golgi apparatus. Its subcellular location is the trans-Golgi network membrane. The protein localises to the trans-Golgi network. Its function is as follows. Involved in the regulation of membrane traffic through the trans-Golgi network (TGN). Functions in close cooperation with the GGAs in the sorting of hydrolases to lysosomes. This is Coiled-coil domain-containing protein 91 (Ccdc91) from Rattus norvegicus (Rat).